We begin with the raw amino-acid sequence, 308 residues long: UPF0282 protein PYRAB09800 (308 aa).

It belongs to the UPF0282 family.

The chain is UPF0282 protein PYRAB09800 from Pyrococcus abyssi (strain GE5 / Orsay).